The chain runs to 2531 residues: Highly reducing polyketide synthase ausV (2531 aa).

The region spanning S7–T432 is the Ketosynthase family 3 (KS3) domain. Residues C180, H315, and H355 each act as for beta-ketoacyl synthase activity in the active site. A malonyl-CoA:ACP transacylase (MAT) domain region spans residues F554 to S882. S644 serves as the catalytic For malonyltransferase activity. An N-terminal hotdog fold region spans residues H939–D1069. The PKS/mFAS DH domain maps to H939–D1238. Positions D940–S1236 are dehydratase (DH) domain. H971 functions as the Proton acceptor; for dehydratase activity in the catalytic mechanism. The interval Y1087–D1238 is C-terminal hotdog fold. D1152 serves as the catalytic Proton donor; for dehydratase activity. The tract at residues S1414–S1592 is methyltransferase (CMet) domain. Residues L1832–R2133 form an enoyl reductase (ER) domain region. A ketoreductase (KR) domain region spans residues H2156–I2331. Residues A2444–S2521 enclose the Carrier domain. S2481 carries the O-(pantetheine 4'-phosphoryl)serine modification.

Its pathway is secondary metabolite biosynthesis; terpenoid biosynthesis. In terms of biological role, highly reducing polyketide synthase; part of the gene cluster that mediates the biosynthesis of calidodehydroaustin, a fungal meroterpenoid. The first step of the pathway is the synthesis of 3,5-dimethylorsellinic acid by the polyketide synthase ausA. 3,5-dimethylorsellinic acid is then prenylated by the polyprenyl transferase ausN. Further epoxidation by the FAD-dependent monooxygenase ausM and cyclization by the probable terpene cyclase ausL lead to the formation of protoaustinoid A. Protoaustinoid A is then oxidized to spiro-lactone preaustinoid A3 by the combined action of the FAD-binding monooxygenases ausB and ausC, and the dioxygenase ausE. Acid-catalyzed keto-rearrangement and ring contraction of the tetraketide portion of preaustinoid A3 by ausJ lead to the formation of preaustinoid A4. The aldo-keto reductase ausK, with the help of ausH, is involved in the next step by transforming preaustinoid A4 into isoaustinone which is in turn hydroxylated by the P450 monooxygenase ausI to form austinolide. The cytochrome P450 monooxygenase ausG modifies austinolide to austinol. Austinol is further acetylated to austin by the O-acetyltransferase ausP, which spontaneously changes to dehydroaustin. The cytochrome P450 monooxygenase ausR then converts dehydroaustin is into 7-dehydrodehydroaustin. The hydroxylation catalyzed by ausR permits the O-acetyltransferase ausQ to add an additional acetyl group to the molecule, leading to the formation of acetoxydehydroaustin. The short chain dehydrogenase ausT catalyzes the reduction of the double bond present between carbon atoms 1 and 2 to convert 7-dehydrodehydroaustin into 1,2-dihydro-7-hydroxydehydroaustin. AusQ catalyzes not only an acetylation reaction but also the addition of the PKS ausV diketide product to 1,2-dihydro-7-hydroxydehydroaustin, forming precalidodehydroaustin. Finally, the iron/alpha-ketoglutarate-dependent dioxygenase converts precalidodehydroaustin into calidodehydroaustin. This chain is Highly reducing polyketide synthase ausV, found in Aspergillus calidoustus.